The sequence spans 397 residues: Multidrug efflux pump subunit AcrA (397 aa).

Positions 1-24 (MNKNRGFTPLAVVLMLSGSLALTG) are cleaved as a signal peptide. Residue Cys25 is the site of N-palmitoyl cysteine attachment. Cys25 carries the S-diacylglycerol cysteine lipid modification. A coiled-coil region spans residues 98–172 (PATYQATYDS…AVETARINLA (75 aa)). The tract at residues 377-397 (EVTADNNQQAASGAQPEQSKS) is disordered. Residues 379–397 (TADNNQQAASGAQPEQSKS) are compositionally biased toward polar residues.

It belongs to the membrane fusion protein (MFP) (TC 8.A.1) family. Monomeric in solution. Homotrimeric; interacts independently with AcrB and TolC as well as AcrZ. Part of the AcrA-AcrB-TolC efflux pump.

The protein localises to the cell inner membrane. Its function is as follows. AcrA-AcrB-AcrZ-TolC is a drug efflux protein complex with broad substrate specificity that uses the proton motive force to export substrates. This subunit may act as an adapter protein that links AcrB and TolC stably together. This chain is Multidrug efflux pump subunit AcrA (acrA), found in Escherichia coli O157:H7.